The chain runs to 171 residues: Minor capsid protein 3 (171 aa).

As to quaternary structure, interacts with the major capsid protein.

It localises to the virion. Functionally, one of the minor capsid proteins that constitute a network internal to the major capsid proteins and outside the lipid membrane. The minor capsid proteins glue and stabilize the capsomers. This Chlorella (PBCV-1) protein is Minor capsid protein 3.